A 447-amino-acid polypeptide reads, in one-letter code: Protein king tubby (447 aa).

2 stretches are compositionally biased toward low complexity: residues 71 to 92 (GTGP…YSDS) and 157 to 169 (NNNN…NSSS). Residues 71–196 (GTGPNVTATS…GGAPDTEGDV (126 aa)) form a disordered region.

The protein belongs to the TUB family.

It is found in the cytoplasm. The protein localises to the nucleus. The protein is Protein king tubby of Anopheles gambiae (African malaria mosquito).